The primary structure comprises 547 residues: Chaperonin GroEL (547 aa).

ATP contacts are provided by residues 29–32, 86–90, glycine 413, 479–481, and aspartate 495; these read TLGP, DGTTT, and NAA.

This sequence belongs to the chaperonin (HSP60) family. Forms a cylinder of 14 subunits composed of two heptameric rings stacked back-to-back. Interacts with the co-chaperonin GroES.

It is found in the cytoplasm. The enzyme catalyses ATP + H2O + a folded polypeptide = ADP + phosphate + an unfolded polypeptide.. Its function is as follows. Together with its co-chaperonin GroES, plays an essential role in assisting protein folding. The GroEL-GroES system forms a nano-cage that allows encapsulation of the non-native substrate proteins and provides a physical environment optimized to promote and accelerate protein folding. The sequence is that of Chaperonin GroEL from Synechococcus sp. (strain RCC307).